The sequence spans 291 residues: Lipoyl synthase 1 (291 aa).

[4Fe-4S] cluster is bound by residues Cys-34, Cys-39, Cys-45, Cys-60, Cys-64, Cys-67, and Ser-274. The region spanning 46–263 (FQAGTATFLI…QVYGEELGFL (218 aa)) is the Radical SAM core domain.

The protein belongs to the radical SAM superfamily. Lipoyl synthase family. [4Fe-4S] cluster is required as a cofactor.

It localises to the cytoplasm. It carries out the reaction [[Fe-S] cluster scaffold protein carrying a second [4Fe-4S](2+) cluster] + N(6)-octanoyl-L-lysyl-[protein] + 2 oxidized [2Fe-2S]-[ferredoxin] + 2 S-adenosyl-L-methionine + 4 H(+) = [[Fe-S] cluster scaffold protein] + N(6)-[(R)-dihydrolipoyl]-L-lysyl-[protein] + 4 Fe(3+) + 2 hydrogen sulfide + 2 5'-deoxyadenosine + 2 L-methionine + 2 reduced [2Fe-2S]-[ferredoxin]. It participates in protein modification; protein lipoylation via endogenous pathway; protein N(6)-(lipoyl)lysine from octanoyl-[acyl-carrier-protein]: step 2/2. Its function is as follows. Catalyzes the radical-mediated insertion of two sulfur atoms into the C-6 and C-8 positions of the octanoyl moiety bound to the lipoyl domains of lipoate-dependent enzymes, thereby converting the octanoylated domains into lipoylated derivatives. The protein is Lipoyl synthase 1 of Nostoc sp. (strain PCC 7120 / SAG 25.82 / UTEX 2576).